Consider the following 236-residue polypeptide: Spore wall protein 12 (236 aa).

A disordered region spans residues 169–188 (KKSKEPKTPSMVSRENDMER).

The protein belongs to the SWP12 family.

Its subcellular location is the spore wall. The chain is Spore wall protein 12 (SWP12) from Encephalitozoon cuniculi (strain GB-M1) (Microsporidian parasite).